The primary structure comprises 101 residues: Small ribosomal subunit protein cS23 (101 aa).

It belongs to the chloroplast-specific ribosomal protein cS23 family. Part of the 30S ribosomal subunit.

The protein localises to the plastid. It is found in the chloroplast. Functionally, probably a ribosomal protein or a ribosome-associated protein. In Cyanidium caldarium (Red alga), this protein is Small ribosomal subunit protein cS23 (ycf65).